Reading from the N-terminus, the 66-residue chain is Large ribosomal subunit protein bL33 (66 aa).

The protein belongs to the bacterial ribosomal protein bL33 family.

In Prochlorococcus marinus (strain MIT 9303), this protein is Large ribosomal subunit protein bL33.